Here is a 109-residue protein sequence, read N- to C-terminus: Fluoride-specific ion channel FluC 1 (109 aa).

The next 3 membrane-spanning stretches (helical) occupy residues 21–41 (LFIN…GFFI), 52–72 (IILS…YFLY), and 84–104 (IIFC…GFWI).

This sequence belongs to the fluoride channel Fluc/FEX (TC 1.A.43) family.

It is found in the cell inner membrane. The enzyme catalyses fluoride(in) = fluoride(out). In terms of biological role, fluoride-specific ion channel. Important for reducing fluoride concentration in the cell, thus reducing its toxicity. The sequence is that of Fluoride-specific ion channel FluC 1 from Prochlorococcus marinus (strain MIT 9312).